The primary structure comprises 86 residues: Large ribosomal subunit protein bL27 (86 aa).

The span at 1 to 10 (MAQKKGGGST) shows a compositional bias: gly residues. Residues 1 to 22 (MAQKKGGGSTRNGRDSESKRLG) are disordered.

This sequence belongs to the bacterial ribosomal protein bL27 family.

The protein is Large ribosomal subunit protein bL27 of Polynucleobacter asymbioticus (strain DSM 18221 / CIP 109841 / QLW-P1DMWA-1) (Polynucleobacter necessarius subsp. asymbioticus).